Consider the following 320-residue polypeptide: MRSAQVYRWQIPMDAGVVLRDRRLKTRDGLYVCLREGEREGWGEISPLPGFSQETWEEAQSVLLAWVNNWLAGDCELPQMPSVAFGVSCALAELTDALPQAANYRAAPLCNGDPDDLILKLADMPGEKVAKVKVGLYEAVRDGMVVNLLLEAIPDLHLRLDANRAWTPLKGQQFAKYVNPDYRHRIAFLEEPCKTRDDSRAFARETGIAIAWDESLREPDFTFVAEEGVRAVVIKPTLTGSLEKVREQVEAAHALGLTAVISSSIESSLGLTQLARIAAWLTPETIPGLDTLDLMQAQQVRRWPGSTLPVVEVDALERLL.

The active-site Proton donor is the Lys133. The Mg(2+) site is built by Asp161, Glu190, and Asp213. Lys235 acts as the Proton acceptor in catalysis.

Belongs to the mandelate racemase/muconate lactonizing enzyme family. MenC type 1 subfamily. The cofactor is a divalent metal cation.

It carries out the reaction (1R,6R)-6-hydroxy-2-succinyl-cyclohexa-2,4-diene-1-carboxylate = 2-succinylbenzoate + H2O. Its pathway is quinol/quinone metabolism; 1,4-dihydroxy-2-naphthoate biosynthesis; 1,4-dihydroxy-2-naphthoate from chorismate: step 4/7. It functions in the pathway quinol/quinone metabolism; menaquinone biosynthesis. Its function is as follows. Converts 2-succinyl-6-hydroxy-2,4-cyclohexadiene-1-carboxylate (SHCHC) to 2-succinylbenzoate (OSB). In Escherichia coli O17:K52:H18 (strain UMN026 / ExPEC), this protein is o-succinylbenzoate synthase.